Here is a 355-residue protein sequence, read N- to C-terminus: Ion-translocating oxidoreductase complex subunit D (355 aa).

Helical transmembrane passes span 13 to 33 (GKLT…ALAV), 35 to 55 (VYYF…LALI), 77 to 97 (VILT…YWVI), 98 to 118 (LIGT…LGQN), and 128 to 148 (VVLL…ISLL). FMN phosphoryl threonine is present on T186. 5 helical membrane passes run 216-236 (AGLG…FLIW), 245-265 (PVAI…FGNA), 267-287 (AVGF…FFIA), 294-314 (PVTP…ICLI), and 318-338 (GNYP…VPLI).

Belongs to the NqrB/RnfD family. In terms of assembly, the complex is composed of six subunits: RnfA, RnfB, RnfC, RnfD, RnfE and RnfG. FMN is required as a cofactor.

It is found in the cell inner membrane. Its function is as follows. Part of a membrane-bound complex that couples electron transfer with translocation of ions across the membrane. This Actinobacillus succinogenes (strain ATCC 55618 / DSM 22257 / CCUG 43843 / 130Z) protein is Ion-translocating oxidoreductase complex subunit D.